Consider the following 389-residue polypeptide: Succinate--CoA ligase [ADP-forming] subunit beta (389 aa).

The region spanning 9–236 (RDMFEAHGVP…KDAADPLEAK (228 aa)) is the ATP-grasp domain. ATP is bound by residues Lys45, 52-54 (GRG), Ala94, and Glu99. Asn191 and Asp205 together coordinate Mg(2+). Substrate is bound by residues Asn256 and 318–320 (GIT).

This sequence belongs to the succinate/malate CoA ligase beta subunit family. Heterotetramer of two alpha and two beta subunits. Requires Mg(2+) as cofactor.

The catalysed reaction is succinate + ATP + CoA = succinyl-CoA + ADP + phosphate. It carries out the reaction GTP + succinate + CoA = succinyl-CoA + GDP + phosphate. The protein operates within carbohydrate metabolism; tricarboxylic acid cycle; succinate from succinyl-CoA (ligase route): step 1/1. In terms of biological role, succinyl-CoA synthetase functions in the citric acid cycle (TCA), coupling the hydrolysis of succinyl-CoA to the synthesis of either ATP or GTP and thus represents the only step of substrate-level phosphorylation in the TCA. The beta subunit provides nucleotide specificity of the enzyme and binds the substrate succinate, while the binding sites for coenzyme A and phosphate are found in the alpha subunit. The protein is Succinate--CoA ligase [ADP-forming] subunit beta of Pseudarthrobacter chlorophenolicus (strain ATCC 700700 / DSM 12829 / CIP 107037 / JCM 12360 / KCTC 9906 / NCIMB 13794 / A6) (Arthrobacter chlorophenolicus).